Reading from the N-terminus, the 277-residue chain is Probable endonuclease 4 (277 aa).

Zn(2+) is bound by residues histidine 69, histidine 109, glutamate 145, aspartate 179, histidine 182, histidine 214, aspartate 227, histidine 229, and glutamate 259.

This sequence belongs to the AP endonuclease 2 family. The cofactor is Zn(2+).

The enzyme catalyses Endonucleolytic cleavage to 5'-phosphooligonucleotide end-products.. In terms of biological role, endonuclease IV plays a role in DNA repair. It cleaves phosphodiester bonds at apurinic or apyrimidinic (AP) sites, generating a 3'-hydroxyl group and a 5'-terminal sugar phosphate. This Bacteroides thetaiotaomicron (strain ATCC 29148 / DSM 2079 / JCM 5827 / CCUG 10774 / NCTC 10582 / VPI-5482 / E50) protein is Probable endonuclease 4.